Reading from the N-terminus, the 376-residue chain is Multiphosphoryl transfer protein (376 aa).

Positions 2-142 (FQLSVQDIHP…EELRALLMGE (141 aa)) constitute a PTS EIIA type-2 domain. The Tele-phosphohistidine intermediate; for EIIA activity role is filled by His62. Position 62 is a phosphohistidine; by HPr (His62). Positions 156–284 (TLDIVASDLL…LTSDDAPTDD (129 aa)) are m domain. Residues 285 to 375 (VLSAEFVVRN…DAIAAGLGEG (91 aa)) form the HPr domain. The Pros-phosphohistidine intermediate; for HPr activity role is filled by His299. His299 is modified (phosphohistidine; by EI).

It is found in the cytoplasm. Its function is as follows. The phosphoenolpyruvate-dependent sugar phosphotransferase system (sugar PTS), a major carbohydrate active transport system, catalyzes the phosphorylation of incoming sugar substrates concomitantly with their translocation across the cell membrane. The enzyme II FruAB PTS system is involved in fructose transport. The chain is Multiphosphoryl transfer protein from Escherichia coli O157:H7.